The chain runs to 342 residues: MHRTTRIKITELNPHLMCALCGGYFIDATTIVECLHSFCKTCIVRYLETNKYCPMCDVQVHKTRPLLSIRSDKTLQDIVYKLVPGLFKDEMKRRRDFYAAYPLTEVPNGSNEDRGEVLEQEKGALGDDEIVSLSIEFYEGVRDREEKKNLTENGDGDKEKTGVRFLRCPAAMTVMHLAKFLRNKMDVPSKYKVEILYEDEPLKEYYTLMDIAYIYPWRRNGPLPLKYRVQPACKRLTLPTVPTPSEGTNTSGASECESVSDKAPSPATLPATSSSLPSPATPSHGSPSSHGPPATHPTSPTPPSTAAGTTTATNGGTSNCLQTPSSTSRGRKMTVNGAPCPP.

Residues 18 to 57 (CALCGGYFIDATTIVECLHSFCKTCIVRYLETNKYCPMCD) form an RING-type zinc finger. Glycyl lysine isopeptide (Lys-Gly) (interchain with G-Cter in SUMO2) cross-links involve residues K51 and K88. The short motif at 81-95 (KLVPGLFKDEMKRRR) is the Nuclear localization signal element. Residue T237 is modified to Phosphothreonine; by PKA. The tract at residues 237–342 (TLPTVPTPSE…MTVNGAPCPP (106 aa)) is disordered. The span at 243-253 (TPSEGTNTSGA) shows a compositional bias: polar residues. Positions 263–318 (APSPATLPATSSSLPSPATPSHGSPSSHGPPATHPTSPTPPSTAAGTTTATNGGTS) are enriched in low complexity. Polar residues predominate over residues 319 to 328 (NCLQTPSSTS). T334 carries the phosphothreonine; by PKA modification.

Exists as both a monomer and homodimer. Component of a PRC1-like complex. Interacts with CBX8, RING1 and RNF2. Interacts with CBX7. Interacts with PHC2. Post-translationally, phosphorylated. Homodimer formation is regulated by phosphorylation with only unphosphorylated proteins forming homodimers. In terms of tissue distribution, expressed in embryonic stem cells. Expressed in a variety of tumor cells and in neural tissues.

It is found in the nucleus. Functionally, transcriptional repressor. Binds specifically to the DNA sequence 5'-GACTNGACT-3'. Has tumor suppressor activity. May play a role in control of cell proliferation and/or neural cell development. Regulates proliferation of early T progenitor cells by maintaining expression of HES1. Also plays a role in antero-posterior specification of the axial skeleton and negative regulation of the self-renewal activity of hematopoietic stem cells. Component of a Polycomb group (PcG) multiprotein PRC1-like complex, a complex class required to maintain the transcriptionally repressive state of many genes, including Hox genes, throughout development. PcG PRC1 complex acts via chromatin remodeling and modification of histones; it mediates monoubiquitination of histone H2A 'Lys-119', rendering chromatin heritably changed in its expressibility. Within the PRC1-like complex, regulates RNF2 ubiquitin ligase activity. In Mus musculus (Mouse), this protein is Polycomb group RING finger protein 2 (Pcgf2).